The chain runs to 88 residues: Small ribosomal subunit protein uS15 (88 aa).

This sequence belongs to the universal ribosomal protein uS15 family. Part of the 30S ribosomal subunit. Forms a bridge to the 50S subunit in the 70S ribosome, contacting the 23S rRNA.

Its function is as follows. One of the primary rRNA binding proteins, it binds directly to 16S rRNA where it helps nucleate assembly of the platform of the 30S subunit by binding and bridging several RNA helices of the 16S rRNA. In terms of biological role, forms an intersubunit bridge (bridge B4) with the 23S rRNA of the 50S subunit in the ribosome. The chain is Small ribosomal subunit protein uS15 from Mesomycoplasma flocculare (Mycoplasma flocculare).